The sequence spans 356 residues: Methionine import ATP-binding protein MetN 1 (356 aa).

Residues 15 to 254 (IQIRALNKTY…PVQPITQELL (240 aa)) form the ABC transporter domain. Residue 51–58 (GKSGAGKS) coordinates ATP.

This sequence belongs to the ABC transporter superfamily. Methionine importer (TC 3.A.1.24) family. As to quaternary structure, the complex is composed of two ATP-binding proteins (MetN), two transmembrane proteins (MetI) and a solute-binding protein (MetQ).

The protein localises to the cell inner membrane. The enzyme catalyses L-methionine(out) + ATP + H2O = L-methionine(in) + ADP + phosphate + H(+). The catalysed reaction is D-methionine(out) + ATP + H2O = D-methionine(in) + ADP + phosphate + H(+). In terms of biological role, part of the ABC transporter complex MetNIQ involved in methionine import. Responsible for energy coupling to the transport system. This Acinetobacter baylyi (strain ATCC 33305 / BD413 / ADP1) protein is Methionine import ATP-binding protein MetN 1.